Here is a 112-residue protein sequence, read N- to C-terminus: Small ribosomal subunit protein bS6c (112 aa).

The protein belongs to the bacterial ribosomal protein bS6 family.

The protein resides in the plastid. The protein localises to the chloroplast. Binds together with bS18 to 16S ribosomal RNA. This chain is Small ribosomal subunit protein bS6c (rps6), found in Porphyra purpurea (Red seaweed).